The following is a 342-amino-acid chain: UDP-3-O-acylglucosamine N-acyltransferase (342 aa).

His-253 acts as the Proton acceptor in catalysis.

It belongs to the transferase hexapeptide repeat family. LpxD subfamily. As to quaternary structure, homotrimer.

It catalyses the reaction a UDP-3-O-[(3R)-3-hydroxyacyl]-alpha-D-glucosamine + a (3R)-hydroxyacyl-[ACP] = a UDP-2-N,3-O-bis[(3R)-3-hydroxyacyl]-alpha-D-glucosamine + holo-[ACP] + H(+). Its pathway is bacterial outer membrane biogenesis; LPS lipid A biosynthesis. Functionally, catalyzes the N-acylation of UDP-3-O-acylglucosamine using 3-hydroxyacyl-ACP as the acyl donor. Is involved in the biosynthesis of lipid A, a phosphorylated glycolipid that anchors the lipopolysaccharide to the outer membrane of the cell. This chain is UDP-3-O-acylglucosamine N-acyltransferase, found in Rickettsia canadensis (strain McKiel).